The primary structure comprises 180 residues: Large ribosomal subunit protein uL5 (180 aa).

Belongs to the universal ribosomal protein uL5 family. As to quaternary structure, part of the 50S ribosomal subunit; part of the 5S rRNA/L5/L18/L25 subcomplex. Contacts the 5S rRNA and the P site tRNA. Forms a bridge to the 30S subunit in the 70S ribosome.

In terms of biological role, this is one of the proteins that bind and probably mediate the attachment of the 5S RNA into the large ribosomal subunit, where it forms part of the central protuberance. In the 70S ribosome it contacts protein S13 of the 30S subunit (bridge B1b), connecting the 2 subunits; this bridge is implicated in subunit movement. Contacts the P site tRNA; the 5S rRNA and some of its associated proteins might help stabilize positioning of ribosome-bound tRNAs. This is Large ribosomal subunit protein uL5 from Streptococcus equi subsp. equi (strain 4047).